Consider the following 102-residue polypeptide: MNGQNIRIRLKAFDHRVLDASTREIVSTAKRTGANVRGPIPLPTRIEKFTVNRSTHIDKKSREQFEMRTHKRLLDIVDPTPQTVDALMKLDLAAGVDVEIKL.

It belongs to the universal ribosomal protein uS10 family. Part of the 30S ribosomal subunit.

In terms of biological role, involved in the binding of tRNA to the ribosomes. This is Small ribosomal subunit protein uS10 from Chelativorans sp. (strain BNC1).